Here is a 102-residue protein sequence, read N- to C-terminus: A-type ATP synthase subunit F (102 aa).

This sequence belongs to the V-ATPase F subunit family. As to quaternary structure, has multiple subunits with at least A(3), B(3), C, D, E, F, H, I and proteolipid K(x).

Its subcellular location is the cell membrane. In terms of biological role, component of the A-type ATP synthase that produces ATP from ADP in the presence of a proton gradient across the membrane. This is A-type ATP synthase subunit F from Thermococcus onnurineus (strain NA1).